The following is a 143-amino-acid chain: Transcriptional regulator MraZ (143 aa).

SpoVT-AbrB domains follow at residues 5–47 and 76–119; these read EYQH…PQDE and ATEC…SKER.

Belongs to the MraZ family. Forms oligomers.

It localises to the cytoplasm. It is found in the nucleoid. The protein is Transcriptional regulator MraZ of Brevibacillus brevis (strain 47 / JCM 6285 / NBRC 100599).